Reading from the N-terminus, the 89-residue chain is MALLDFFLSRKKNTANIAKERLQIIVAERRRGDAEPHYLPQLRKDILEVICKYVQIDPEMVSVQLEQRDGDISILELNVTLPETEESKP.

It belongs to the MinE family.

In terms of biological role, prevents the cell division inhibition by proteins MinC and MinD at internal division sites while permitting inhibition at polar sites. This ensures cell division at the proper site by restricting the formation of a division septum at the midpoint of the long axis of the cell. The sequence is that of Cell division topological specificity factor from Klebsiella pneumoniae (strain 342).